Here is a 173-residue protein sequence, read N- to C-terminus: Aliphatic sulfonate oxidoreductase, polyferredoxin-like subunit (173 aa).

4Fe-4S ferredoxin-type domains lie at 9 to 40, 48 to 80, and 82 to 111; these read IWIL…WPEA, LFPG…VDEK, and GAVV…IPAG. C18, C21, C24, C28, C58, C61, C66, C70, C91, C94, C97, C101, C118, C121, C127, and C131 together coordinate [4Fe-4S] cluster.

Heterodimer composed of a small WOR5-S subunit, with four [4Fe-4S] clusters, and a large WOR5-L subunit, containing the active site tungsto-bispyranopterin cofactor as well as another [4Fe-4S] cluster. The cofactor is [4Fe-4S] cluster.

It localises to the cytoplasm. In terms of biological role, polyferredoxin-like subunit of an oxidoreductase that can desulfonate and oxidize aliphatic sulfonates such as taurine. May serve as a an electron-transfer subunit between the catalytic subunit and ferredoxin. This Pyrococcus furiosus (strain ATCC 43587 / DSM 3638 / JCM 8422 / Vc1) protein is Aliphatic sulfonate oxidoreductase, polyferredoxin-like subunit.